Reading from the N-terminus, the 637-residue chain is Glutathione hydrolase 3 (637 aa).

Residues 28–48 (LKISLLLLLILLATSGYYSFS) traverse the membrane as a helical segment. Asn-50 carries N-linked (GlcNAc...) asparagine glycosylation. Position 147 (Arg-147) interacts with L-glutamate. N-linked (GlcNAc...) asparagine glycosylation is found at Asn-271, Asn-374, and Asn-398. Thr-418 (nucleophile) is an active-site residue. L-glutamate is bound by residues Thr-436, Asn-438, Glu-457, Asp-460, 488-489 (SS), and 509-510 (GG). An N-linked (GlcNAc...) asparagine glycan is attached at Asn-553.

Belongs to the gamma-glutamyltransferase family. In terms of tissue distribution, expressed in roots, cotyledons, leaves, flowers and siliques.

It localises to the vacuole membrane. It catalyses the reaction an N-terminal (5-L-glutamyl)-[peptide] + an alpha-amino acid = 5-L-glutamyl amino acid + an N-terminal L-alpha-aminoacyl-[peptide]. It carries out the reaction glutathione + H2O = L-cysteinylglycine + L-glutamate. The catalysed reaction is an S-substituted glutathione + H2O = an S-substituted L-cysteinylglycine + L-glutamate. The protein operates within sulfur metabolism; glutathione metabolism. May play a role in protecting plants from some xenobiotic chemicals by degrading vacuolar glutathione conjugates into cysteine conjugates. This Arabidopsis thaliana (Mouse-ear cress) protein is Glutathione hydrolase 3 (GGT3).